The sequence spans 404 residues: Pectate lyase E (404 aa).

Positions 1–41 are cleaved as a signal peptide; the sequence is MNNSRMSSVSTQKTTGRSALGTKSALAAIIATTMMVSVASA. Positions 182 and 225 each coordinate Ca(2+). Arginine 278 is a catalytic residue.

This sequence belongs to the polysaccharide lyase 1 family. PLBC subfamily. Requires Ca(2+) as cofactor.

The protein resides in the secreted. The catalysed reaction is Eliminative cleavage of (1-&gt;4)-alpha-D-galacturonan to give oligosaccharides with 4-deoxy-alpha-D-galact-4-enuronosyl groups at their non-reducing ends.. Its pathway is glycan metabolism; pectin degradation; 2-dehydro-3-deoxy-D-gluconate from pectin: step 2/5. Involved in maceration and soft-rotting of plant tissue. Pectate lyases have been implicated as pathogenicity factors which induce maceration or rotting of plant tissue. PelE is sufficient to induce these effects under laboratory conditions. The chain is Pectate lyase E (pelE) from Dickeya dadantii (strain 3937) (Erwinia chrysanthemi (strain 3937)).